The chain runs to 483 residues: Altronate oxidoreductase (483 aa).

18-29 (IIQFGEGNFLRA) serves as a coordination point for NAD(+).

The protein belongs to the mannitol dehydrogenase family. UxaB subfamily.

The catalysed reaction is D-altronate + NAD(+) = keto-D-tagaturonate + NADH + H(+). It participates in carbohydrate metabolism; pentose and glucuronate interconversion. The protein is Altronate oxidoreductase of Escherichia coli O7:K1 (strain IAI39 / ExPEC).